A 678-amino-acid chain; its full sequence is GAS2-like protein 1 (678 aa).

Position 2 is an N-acetylalanine (A2). Residues E27 to A148 form the Calponin-homology (CH) domain. The region spanning N203–R275 is the GAR domain. Residues C276–F291 are compositionally biased toward polar residues. Disordered regions lie at residues C276–L524 and A538–M678. A phosphoserine mark is found at S306 and S316. Residues G327–D340 are compositionally biased toward basic and acidic residues. The residue at position 334 (T334) is a Phosphothreonine. 2 positions are modified to phosphoserine: S352 and S355. Positions D354 to G365 are enriched in low complexity. Positions R370 to E381 are enriched in basic and acidic residues. Low complexity predominate over residues P392–S403. Position 394 is a phosphoserine (S394). Residues Q404–R413 are compositionally biased toward basic and acidic residues. Phosphoserine occurs at positions 436 and 438. The segment covering Q437–Q454 has biased composition (basic and acidic residues). Residues G461–G471 are compositionally biased toward gly residues. Phosphoserine is present on residues S482 and S489. Positions A485–G495 are enriched in pro residues. Position 490 is an omega-N-methylarginine (R490). S493 bears the Phosphoserine mark. T501 is subject to Phosphothreonine. R507 carries the post-translational modification Omega-N-methylarginine. Composition is skewed to low complexity over residues P509 to Q519 and D554 to S568. R630 is modified (omega-N-methylarginine). The segment covering G631–P641 has biased composition (basic and acidic residues). The residue at position 654 (S654) is a Phosphoserine. Polar residues predominate over residues H666 to M678.

It belongs to the GAS2 family. Interacts with MAPRE1.

It localises to the cytoplasm. The protein resides in the cytoskeleton. The protein localises to the stress fiber. In terms of biological role, seems to be involved in the cross-linking of microtubules and microfilaments. Regulates microtubule dynamics and stability by interacting with microtubule plus-end tracking proteins, such as MAPRE1, to regulate microtubule growth along actin stress fibers. In Mus musculus (Mouse), this protein is GAS2-like protein 1 (Gas2l1).